A 405-amino-acid polypeptide reads, in one-letter code: Bifunctional enzyme IspD/IspF (405 aa).

The interval 1-246 (MLQMPSKQPI…KLSASLLPDV (246 aa)) is 2-C-methyl-D-erythritol 4-phosphate cytidylyltransferase. The tract at residues 247-405 (RTGNGYDVHQ…TATVVYRGRT (159 aa)) is 2-C-methyl-D-erythritol 2,4-cyclodiphosphate synthase. Residues Asp-253 and His-255 each contribute to the a divalent metal cation site. Residues 253-255 (DVH) and 279-280 (HS) each bind 4-CDP-2-C-methyl-D-erythritol 2-phosphate. His-287 is a binding site for a divalent metal cation. 4-CDP-2-C-methyl-D-erythritol 2-phosphate contacts are provided by residues 301–303 (DIG), 377–380 (TTNE), Phe-384, and Arg-387.

In the N-terminal section; belongs to the IspD/TarI cytidylyltransferase family. IspD subfamily. The protein in the C-terminal section; belongs to the IspF family. A divalent metal cation serves as cofactor.

The enzyme catalyses 2-C-methyl-D-erythritol 4-phosphate + CTP + H(+) = 4-CDP-2-C-methyl-D-erythritol + diphosphate. The catalysed reaction is 4-CDP-2-C-methyl-D-erythritol 2-phosphate = 2-C-methyl-D-erythritol 2,4-cyclic diphosphate + CMP. Its pathway is isoprenoid biosynthesis; isopentenyl diphosphate biosynthesis via DXP pathway; isopentenyl diphosphate from 1-deoxy-D-xylulose 5-phosphate: step 2/6. The protein operates within isoprenoid biosynthesis; isopentenyl diphosphate biosynthesis via DXP pathway; isopentenyl diphosphate from 1-deoxy-D-xylulose 5-phosphate: step 4/6. Functionally, bifunctional enzyme that catalyzes the formation of 4-diphosphocytidyl-2-C-methyl-D-erythritol from CTP and 2-C-methyl-D-erythritol 4-phosphate (MEP) (IspD), and catalyzes the conversion of 4-diphosphocytidyl-2-C-methyl-D-erythritol 2-phosphate (CDP-ME2P) to 2-C-methyl-D-erythritol 2,4-cyclodiphosphate (ME-CPP) with a corresponding release of cytidine 5-monophosphate (CMP) (IspF). The chain is Bifunctional enzyme IspD/IspF from Rhizobium etli (strain CIAT 652).